We begin with the raw amino-acid sequence, 1666 residues long: Cortactin-binding protein 2 (1666 aa).

Disordered stretches follow at residues 1–25 (MATD…APAE), 202–224 (EKKR…AEME), 366–411 (IVSS…PAIQ), 457–481 (NANN…SPTS), and 501–619 (RFTS…PKPS). Residues 120–274 (KMQERMSTQL…MTEQLKRGND (155 aa)) adopt a coiled-coil conformation. Composition is skewed to low complexity over residues 385–398 (GPST…PSST) and 457–468 (NANNDQDQNGNN). The segment covering 469-481 (TQSPPSRDVSPTS) has biased composition (polar residues). At arginine 501 the chain carries Asymmetric dimethylarginine. ANK repeat units lie at residues 712-742 (GRPT…DINH), 746-775 (DGHS…QVNA), 779-808 (DGFT…NINH), 812-841 (EGQT…DRSV), 845-874 (DGWT…PACG), and 915-945 (EGWT…EPER). Residue serine 1527 is modified to Phosphoserine. The segment covering 1545 to 1566 (SESDISKIADTRDDLRRFDSSR) has biased composition (basic and acidic residues). Disordered stretches follow at residues 1545 to 1601 (SESD…RSNR) and 1620 to 1666 (RSKI…KPNQ). Residues 1585 to 1594 (KEVSPLSSHQ) show a composition bias toward polar residues. Low complexity predominate over residues 1627 to 1641 (SQNTKRSSSSSNTRQ). A compositionally biased stretch (basic and acidic residues) spans 1648–1666 (SKDEIWNLRNNEQIEKPNQ).

As to quaternary structure, interacts with CTTN/cortactin SH3 domain. Interacts with STRN, STRN4/zinedin and MOB4/phocein; this interactions mediate the association with the STRIPAK core complex and may regulate dendritic spine distribution of the STRIPAK complex in hippocampal neurons. Activation of glutamate receptors weakens the interaction with STRN and STRN4.

It localises to the cytoplasm. Its subcellular location is the cell cortex. The protein resides in the cell projection. The protein localises to the dendritic spine. Functionally, regulates the dendritic spine distribution of CTTN/cortactin in hippocampal neurons, and thus controls dendritic spinogenesis and dendritic spine maintenance. Associates with the striatin-interacting phosphatase and kinase (STRIPAK) core complex to regulate dendritic spine distribution of the STRIPAK complex in hippocampal neurons. The polypeptide is Cortactin-binding protein 2 (CTTNBP2) (Echinops telfairi (Lesser hedgehog tenrec)).